We begin with the raw amino-acid sequence, 396 residues long: Elongation factor Tu (396 aa).

One can recognise a tr-type G domain in the interval Lys10 to Val206. Residues Gly19–Thr26 are G1. Gly19–Thr26 serves as a coordination point for GTP. Thr26 is a binding site for Mg(2+). Residues Gly60–Asn64 form a G2 region. The segment at Asp81–Gly84 is G3. Residues Asp81–His85 and Asn136–Asp139 each bind GTP. The G4 stretch occupies residues Asn136–Asp139. Residues Ser176–Leu178 are G5.

The protein belongs to the TRAFAC class translation factor GTPase superfamily. Classic translation factor GTPase family. EF-Tu/EF-1A subfamily. In terms of assembly, monomer.

It is found in the cytoplasm. The enzyme catalyses GTP + H2O = GDP + phosphate + H(+). Functionally, GTP hydrolase that promotes the GTP-dependent binding of aminoacyl-tRNA to the A-site of ribosomes during protein biosynthesis. This chain is Elongation factor Tu, found in Mycoplasmopsis agalactiae (strain NCTC 10123 / CIP 59.7 / PG2) (Mycoplasma agalactiae).